The chain runs to 94 residues: MTKSELIERLAGQQSHVPTKVVEDAVKEMLEHMAGTLAEGERIEIRGFGSFSLHYRAPRVGRNPKTGAKVELEGKYVPHFKPGKELRDRANIYG.

Belongs to the bacterial histone-like protein family. Heterodimer of an alpha and a beta chain.

Its function is as follows. This protein is one of the two subunits of integration host factor, a specific DNA-binding protein that functions in genetic recombination as well as in transcriptional and translational control. This is Integration host factor subunit beta from Yersinia enterocolitica serotype O:8 / biotype 1B (strain NCTC 13174 / 8081).